The primary structure comprises 316 residues: Protoheme IX farnesyltransferase (316 aa).

Transmembrane regions (helical) follow at residues 34–54, 55–75, 95–115, 118–138, 155–175, 182–202, 228–250, 254–273, and 287–307; these read VMSL…GHIN, PFIG…SGAL, IPAG…LSAF, IILG…TIFF, IVIG…CVTG, IVLF…LALF, IVIY…FASL, AFAT…VLRM, and FAFS…DYAI.

Belongs to the UbiA prenyltransferase family. Protoheme IX farnesyltransferase subfamily.

It localises to the cell inner membrane. It carries out the reaction heme b + (2E,6E)-farnesyl diphosphate + H2O = Fe(II)-heme o + diphosphate. Its pathway is porphyrin-containing compound metabolism; heme O biosynthesis; heme O from protoheme: step 1/1. Converts heme B (protoheme IX) to heme O by substitution of the vinyl group on carbon 2 of heme B porphyrin ring with a hydroxyethyl farnesyl side group. The protein is Protoheme IX farnesyltransferase of Rhizobium meliloti (strain 1021) (Ensifer meliloti).